The primary structure comprises 132 residues: Agouti-signaling protein (132 aa).

Positions 1-22 (MDVTRLLLATLLVFLCFFTACS) are cleaved as a signal peptide. Asparagine 39 is a glycosylation site (N-linked (GlcNAc...) asparagine). A disordered region spans residues 61 to 87 (QISRKEAEKKRSSKKEASMKKVARPRT). A compositionally biased stretch (basic and acidic residues) spans 63-79 (SRKEAEKKRSSKKEASM). 5 disulfide bridges follow: cysteine 93–cysteine 108, cysteine 100–cysteine 114, cysteine 107–cysteine 125, cysteine 111–cysteine 132, and cysteine 116–cysteine 123. One can recognise an Agouti domain in the interval 93 to 132 (CVATRDSCKPPAPACCDPCASCQCRFFRSACSCRVLSLNC).

Its subcellular location is the secreted. In terms of biological role, involved in the regulation of melanogenesis. The binding of ASP to MC1R precludes alpha-MSH initiated signaling and thus blocks production of cAMP, leading to a down-regulation of eumelanogenesis (brown/black pigment) and thus increasing synthesis of pheomelanin (yellow/red pigment). This Macaca nigrescens (Gorontalo macaque) protein is Agouti-signaling protein (ASIP).